Consider the following 88-residue polypeptide: MRLFIALPVLIVVVAMALEGPAPAQAAPDFSSAMESLPDKLKEFGNTLEDKARAAIEHIKQKEIMIKTRNWFSETLNKMKEKLKTTFA.

A signal peptide spans Met1–Ala26.

This sequence belongs to the apolipoprotein C1 family.

It localises to the secreted. Inhibitor of lipoprotein binding to the low density lipoprotein (LDL) receptor, LDL receptor-related protein, and very low density lipoprotein (VLDL) receptor. Associates with high density lipoproteins (HDL) and the triacylglycerol-rich lipoproteins in the plasma and makes up about 10% of the protein of the VLDL and 2% of that of HDL. Appears to interfere directly with fatty acid uptake and is also the major plasma inhibitor of cholesteryl ester transfer protein (CETP). Binds free fatty acids and reduces their intracellular esterification. Modulates the interaction of APOE with beta-migrating VLDL and inhibits binding of beta-VLDL to the LDL receptor-related protein. The polypeptide is Apolipoprotein C-I (Apoc1) (Rattus norvegicus (Rat)).